The sequence spans 650 residues: Leukocyte immunoglobulin-like receptor subfamily B member 1 (650 aa).

A signal peptide spans 1-23 (MTPILTVLICLGLSLGPRTHVQA). Residues 24-461 (GHLPKPTLWA…QSGLGRHLGV (438 aa)) lie on the Extracellular side of the membrane. Ig-like C2-type domains lie at 27–115 (PKPT…DPLE), 116–221 (LVVT…LVLG), 222–312 (VSKK…APSD), and 313–409 (PLDI…YLLT). 4 cysteine pairs are disulfide-bonded: cysteine 49–cysteine 98, cysteine 145–cysteine 197, cysteine 157–cysteine 167, and cysteine 246–cysteine 297. Residues asparagine 281, asparagine 302, and asparagine 341 are each glycosylated (N-linked (GlcNAc...) asparagine). An intrachain disulfide couples cysteine 346 to cysteine 397. The disordered stretch occupies residues 415 to 451 (LELVVSGPSGGPSSPTTGPTSTSGPEDQPLTPTGSDP). Low complexity predominate over residues 425–439 (GPSSPTTGPTSTSGP). A helical membrane pass occupies residues 462 to 482 (VIGILVAVILLLLLLLLLFLI). Residues 483–650 (LRHRRQGKHW…PSIYATLAIH (168 aa)) are Cytoplasmic-facing. A disordered region spans residues 491-524 (HWTSTQRKADFQHPAGAVGPEPTDRGLQWRSSPA). 2 short sequence motifs (ITIM motif) span residues 531 to 536 (NLYAAV) and 560 to 565 (VTYAEV). At tyrosine 533 the chain carries Phosphotyrosine. Residues 563 to 650 (AEVKHSRPRR…PSIYATLAIH (88 aa)) are disordered. 2 stretches are compositionally biased toward basic and acidic residues: residues 564–574 (EVKHSRPRREM) and 586–600 (LDTK…RQMD). 2 short sequence motifs (ITIM motif) span residues 612 to 617 (VTYAQL) and 642 to 647 (SIYATL). Phosphotyrosine occurs at positions 614 and 644.

As to quaternary structure, binds PTPN6 when phosphorylated. Binds FCER1A and FCGR1A. Interacts with human cytomegalovirus/HHV-5 protein UL18. Interacts with peptide-bound HLA-G-B2M complex. Interacts with peptide-bound HLA-F-B2M complex but not with peptide-free HLA-F open conformer. It does not probe the peptide sequence directly. Phosphorylated on tyrosine residues. Dephosphorylated by PTPN6. As to expression, expressed in B cells, monocytes and various dendritic cell (DC) subsets including myeloid, plasmacytoid and tolerogenic DCs (at protein level). Expressed in decidual macrophages (at protein level). Expressed in decidual NK cells (at protein level).

The protein localises to the cell membrane. It is found in the secreted. Functionally, receptor for class I MHC antigens. Recognizes a broad spectrum of HLA-A, HLA-B, HLA-C, HLA-G and HLA-F alleles. Receptor for H301/UL18, a human cytomegalovirus class I MHC homolog. Ligand binding results in inhibitory signals and down-regulation of the immune response. Engagement of LILRB1 present on natural killer cells or T-cells by class I MHC molecules protects the target cells from lysis. Interaction with HLA-B or HLA-E leads to inhibition of FCER1A signaling and serotonin release. Inhibits FCGR1A-mediated phosphorylation of cellular proteins and mobilization of intracellular calcium ions. Recognizes HLA-G in complex with B2M/beta-2 microglobulin and a nonamer self-peptide. Upon interaction with peptide-bound HLA-G-B2M complex, triggers secretion of growth-promoting factors by decidual NK cells. Reprograms B cells toward an immune suppressive phenotype. The protein is Leukocyte immunoglobulin-like receptor subfamily B member 1 of Homo sapiens (Human).